The primary structure comprises 59 residues: Aedesin (59 aa).

Residues 1 to 23 (MNFTKLFAIVLLAALVLLGQTEA) form the signal peptide.

The protein belongs to the cecropin family. As to expression, salivary gland (at protein level).

The protein localises to the secreted. In terms of biological role, antimicrobial peptide. Exhibits antibacterial activity against Gram-negative bacteria, such as Escherichia coli, Pseudomonas aeruginosa, Acinetobacter baumannii and Klebsiella pneumoniae. Shows no antibacterial effects against Gram-positive bacteria, such as Staphylococcus aureus, Enterococcus faecalis and Enterococcus faecium. Exhibits antiviral activity against all four dengue virus serotypes and chikungunya virus. Exhibits leishmanicidal activity. Partially neutralizes lipopolysaccharides (LPS). Exhibits anti-inflammatory properties: inhibits LPS-induced iNOS/NOS2 transcription, nitric oxide (NO) and pro-inflammatory cytokine production in mouse macrophages and human peripheral blood mononuclear cells (PBMCs); inhibits LPS-induced activation of MAPK and NF-kappa-B signaling pathways in mouse macrophages. The polypeptide is Aedesin (Aedes aegypti (Yellowfever mosquito)).